The chain runs to 341 residues: Elongation factor Ts, mitochondrial 2 (341 aa).

The transit peptide at 1–17 (MLAARFASRAFPRTRLY) directs the protein to the mitochondrion.

This sequence belongs to the EF-Ts family.

The protein resides in the mitochondrion. In terms of biological role, associates with the EF-Tu.GDP complex and induces the exchange of GDP to GTP. It remains bound to the aminoacyl-tRNA.EF-Tu.GTP complex up to the GTP hydrolysis stage on the ribosome. In Postia placenta (strain ATCC 44394 / Madison 698-R) (Brown rot fungus), this protein is Elongation factor Ts, mitochondrial 2.